A 271-amino-acid polypeptide reads, in one-letter code: MKLVFYGAGNMAQAIFKGIINSKKLKSHDIYLTNKSNEEALKNFAEELGVEYSYDDEKLLQDADYVFLGSKPYDFEKVAQRIQPYINENNRFISIMAGLPINYIQEQLQVENPIARIMPNTNAQVGHSVTGISFSGNFGPKSKEEVNDLVNAFGSVIEVDEDHLHQVTAITGSGPAFLYHVFEQYVKAGTDLGLEKDQVEESIKNLIIGTSKMIERSDLSMEQLRKNITSKGGTTQAGLNALAQHDIEAIFKDCLNAAVHRSVELSKNEDN.

It belongs to the pyrroline-5-carboxylate reductase family.

The protein localises to the cytoplasm. The enzyme catalyses L-proline + NADP(+) = (S)-1-pyrroline-5-carboxylate + NADPH + 2 H(+). It carries out the reaction L-proline + NAD(+) = (S)-1-pyrroline-5-carboxylate + NADH + 2 H(+). Its pathway is amino-acid biosynthesis; L-proline biosynthesis; L-proline from L-glutamate 5-semialdehyde: step 1/1. In terms of biological role, catalyzes the reduction of 1-pyrroline-5-carboxylate (PCA) to L-proline. This is Pyrroline-5-carboxylate reductase from Staphylococcus haemolyticus (strain JCSC1435).